We begin with the raw amino-acid sequence, 191 residues long: GDP-mannose pyrophosphatase (191 aa).

Residues 38-40 (IRE), R67, and 85-87 (AGL) contribute to the GDP-alpha-D-mannose site. The Nudix hydrolase domain maps to 43–180 (DRGNGATILL…RIKDGKTIML (138 aa)). The Mg(2+) site is built by A85, E100, and E104. The Nudix box signature appears at 86 to 106 (GLLDNDSPEECIRREAMEETG). GDP-alpha-D-mannose contacts are provided by residues E104, E127, 150–151 (DE), and K176. Position 151 (E151) interacts with Mg(2+).

Belongs to the Nudix hydrolase family. NudK subfamily. Homodimer. The cofactor is Mg(2+).

The enzyme catalyses GDP-alpha-D-mannose + H2O = alpha-D-mannose 1-phosphate + GMP + 2 H(+). Nucleoside diphosphate sugar hydrolase that hydrolyzes GDP-mannose as its preferred substrate, yielding GMP and mannose-1-phosphate. This Yersinia enterocolitica serotype O:8 / biotype 1B (strain NCTC 13174 / 8081) protein is GDP-mannose pyrophosphatase (nudK).